A 542-amino-acid chain; its full sequence is Glucose-6-phosphate isomerase (542 aa).

The Proton donor role is filled by glutamate 354. Active-site residues include histidine 385 and lysine 505.

It belongs to the GPI family.

The protein resides in the cytoplasm. It carries out the reaction alpha-D-glucose 6-phosphate = beta-D-fructose 6-phosphate. It participates in carbohydrate biosynthesis; gluconeogenesis. The protein operates within carbohydrate degradation; glycolysis; D-glyceraldehyde 3-phosphate and glycerone phosphate from D-glucose: step 2/4. In terms of biological role, catalyzes the reversible isomerization of glucose-6-phosphate to fructose-6-phosphate. The protein is Glucose-6-phosphate isomerase of Nitrosospira multiformis (strain ATCC 25196 / NCIMB 11849 / C 71).